A 66-amino-acid polypeptide reads, in one-letter code: Large ribosomal subunit protein bL35 (66 aa).

Basic residues predominate over residues methionine 1–arginine 16. Residues methionine 1–glycine 20 are disordered.

It belongs to the bacterial ribosomal protein bL35 family.

The polypeptide is Large ribosomal subunit protein bL35 (Streptococcus thermophilus (strain ATCC BAA-250 / LMG 18311)).